Here is a 599-residue protein sequence, read N- to C-terminus: Elongation factor 4 (599 aa).

Positions 2 to 184 (NYKRNFSIIA…RLVRDIPAPK (183 aa)) constitute a tr-type G domain. GTP contacts are provided by residues 14 to 19 (DHGKST) and 131 to 134 (NKID).

This sequence belongs to the TRAFAC class translation factor GTPase superfamily. Classic translation factor GTPase family. LepA subfamily.

The protein localises to the cell membrane. It carries out the reaction GTP + H2O = GDP + phosphate + H(+). Required for accurate and efficient protein synthesis under certain stress conditions. May act as a fidelity factor of the translation reaction, by catalyzing a one-codon backward translocation of tRNAs on improperly translocated ribosomes. Back-translocation proceeds from a post-translocation (POST) complex to a pre-translocation (PRE) complex, thus giving elongation factor G a second chance to translocate the tRNAs correctly. Binds to ribosomes in a GTP-dependent manner. In Hamiltonella defensa subsp. Acyrthosiphon pisum (strain 5AT), this protein is Elongation factor 4.